The sequence spans 418 residues: eIF5-mimic protein 2-B (418 aa).

Over residues 1-15 (MSYQKQQKPTLTGQR) the composition is skewed to polar residues. The segment at 1–29 (MSYQKQQKPTLTGQRFKTRKRDEKERFDP) is disordered. Residues 247–414 (NQQSLGARKE…KNAEEESESE (168 aa)) enclose the W2 domain.

It belongs to the BZW family.

Translation initiation regulator which may repress repeat-associated non-AUG (RAN) initiated translation probably by acting as a competitive inhibitor of eukaryotic translation initiation factor 5 (EIF5) function. Enhances histone H4 gene transcription but does not seem to bind DNA directly. This chain is eIF5-mimic protein 2-B (bzw1b), found in Danio rerio (Zebrafish).